We begin with the raw amino-acid sequence, 184 residues long: Isopentenyl-diphosphate Delta-isomerase (184 aa).

Histidine 25 and histidine 32 together coordinate Mn(2+). The region spanning 30–164 (PLHLAFSCWL…PWAFSPWMVL (135 aa)) is the Nudix hydrolase domain. Cysteine 67 is a catalytic residue. Position 69 (histidine 69) interacts with Mn(2+). Residue glutamate 87 coordinates Mg(2+). Glutamate 114 and glutamate 116 together coordinate Mn(2+). Residue glutamate 116 is part of the active site.

This sequence belongs to the IPP isomerase type 1 family. Homodimer. Requires Mg(2+) as cofactor. It depends on Mn(2+) as a cofactor.

The protein localises to the cytoplasm. The catalysed reaction is isopentenyl diphosphate = dimethylallyl diphosphate. It participates in isoprenoid biosynthesis; dimethylallyl diphosphate biosynthesis; dimethylallyl diphosphate from isopentenyl diphosphate: step 1/1. In terms of biological role, catalyzes the 1,3-allylic rearrangement of the homoallylic substrate isopentenyl (IPP) to its highly electrophilic allylic isomer, dimethylallyl diphosphate (DMAPP). This Klebsiella pneumoniae (strain 342) protein is Isopentenyl-diphosphate Delta-isomerase.